The primary structure comprises 358 residues: Methylthioribose-1-phosphate isomerase (358 aa).

Residue Met-1 is modified to N-acetylmethionine. Asp-248 serves as the catalytic Proton donor.

This sequence belongs to the eIF-2B alpha/beta/delta subunits family. MtnA subfamily.

Its subcellular location is the cytoplasm. The protein localises to the nucleus. It carries out the reaction 5-(methylsulfanyl)-alpha-D-ribose 1-phosphate = 5-(methylsulfanyl)-D-ribulose 1-phosphate. The protein operates within amino-acid biosynthesis; L-methionine biosynthesis via salvage pathway; L-methionine from S-methyl-5-thio-alpha-D-ribose 1-phosphate: step 1/6. Its function is as follows. Catalyzes the interconversion of methylthioribose-1-phosphate (MTR-1-P) into methylthioribulose-1-phosphate (MTRu-1-P). The sequence is that of Methylthioribose-1-phosphate isomerase from Bos taurus (Bovine).